A 203-amino-acid chain; its full sequence is MCDYKVSERAYAKLIFHAAKYPHQAVNGLLLAEKTSKGSQVEIVDAIPLFHQCLYVTPMAEVALMLIDAHAEREGLVIAGYYAAPENFYDNQVDKTPAAKIADKIQENFKNACFVVVDNKLMTLQHDRAAIQVFNCPGDSGARWSKAKFTLSQASDTLEGVSLLLKRGAMRDLVDFDNHLDNPDKNWTNDFLNQPLNDLQKLY.

The MPN domain maps to Y4–S140.

The protein belongs to the EMC8/EMC9 family. As to quaternary structure, component of the ER membrane protein complex (EMC).

It is found in the endoplasmic reticulum membrane. In terms of biological role, part of the endoplasmic reticulum membrane protein complex (EMC) that enables the energy-independent insertion into endoplasmic reticulum membranes of newly synthesized multi-pass membrane proteins like rhodopsins. The sequence is that of ER membrane protein complex subunit 8/9 homolog from Drosophila melanogaster (Fruit fly).